The primary structure comprises 200 residues: Isochorismatase family protein 2A (200 aa).

Belongs to the isochorismatase family.

This is Isochorismatase family protein 2A from Dictyostelium discoideum (Social amoeba).